Consider the following 231-residue polypeptide: Flagellar L-ring protein (231 aa).

A signal peptide spans 1 to 18 (MNRLMIVSLLGIATALGG). The N-palmitoyl cysteine moiety is linked to residue Cys19. A lipid anchor (S-diacylglycerol cysteine) is attached at Cys19. The interval 118 to 141 (LSLSAEYGGSRDAKGDSQAGQSNS) is disordered.

This sequence belongs to the FlgH family. The basal body constitutes a major portion of the flagellar organelle and consists of four rings (L,P,S, and M) mounted on a central rod.

The protein resides in the cell outer membrane. The protein localises to the bacterial flagellum basal body. In terms of biological role, assembles around the rod to form the L-ring and probably protects the motor/basal body from shearing forces during rotation. The sequence is that of Flagellar L-ring protein from Pseudomonas aeruginosa (strain LESB58).